Reading from the N-terminus, the 344-residue chain is Dihydroorotate dehydrogenase (quinone) (344 aa).

FMN contacts are provided by residues 65–69 and Thr-89; that span reads AGLDK. Lys-69 lines the substrate pocket. 114–118 is a binding site for substrate; the sequence is NRMGF. 2 residues coordinate FMN: Asn-145 and Asn-178. Asn-178 provides a ligand contact to substrate. Ser-181 acts as the Nucleophile in catalysis. Asn-183 is a binding site for substrate. Lys-223 and Thr-251 together coordinate FMN. Substrate is bound at residue 252-253; sequence NT. Residues Gly-274, Gly-303, and 324 to 325 contribute to the FMN site; that span reads YS.

The protein belongs to the dihydroorotate dehydrogenase family. Type 2 subfamily. As to quaternary structure, monomer. FMN serves as cofactor.

It is found in the cell membrane. The enzyme catalyses (S)-dihydroorotate + a quinone = orotate + a quinol. Its pathway is pyrimidine metabolism; UMP biosynthesis via de novo pathway; orotate from (S)-dihydroorotate (quinone route): step 1/1. Functionally, catalyzes the conversion of dihydroorotate to orotate with quinone as electron acceptor. In Cupriavidus taiwanensis (strain DSM 17343 / BCRC 17206 / CCUG 44338 / CIP 107171 / LMG 19424 / R1) (Ralstonia taiwanensis (strain LMG 19424)), this protein is Dihydroorotate dehydrogenase (quinone).